The following is a 180-amino-acid chain: MNILSRCLMALSRKSRMSIKDVTFSSEGALYTIVISSSTIEQMVSECLKAGVNETGGILIGSYSEDSSTAMIVEATTRPADSLAGRTTFQRGVRGLRPLLHARWKTGLYYVGEWHFHPGGSPEPSGDDFRSMTSIAANSDYQCLEPVMIILGGDPAGSYSLSASVSPRGDAPIRLREVLI.

One can recognise an MPN domain in the interval 33 to 165 (IVISSSTIEQ…AGSYSLSASV (133 aa)). Glu54 acts as the Proton donor/acceptor in catalysis. Zn(2+)-binding residues include His115, His117, and Asp128.

Belongs to the peptidase M67B family. Cap3 isopeptidase subfamily.

Functionally, metalloprotease priming reversal component of a CBASS antivirus system. CBASS (cyclic oligonucleotide-based antiphage signaling system) provides immunity against bacteriophages. The CD-NTase protein (CdnD) synthesizes cyclic nucleotides in response to infection; these serve as specific second messenger signals. The signals activate a diverse range of effectors, leading to bacterial cell death and thus abortive phage infection. A type II-C(AAG) CBASS system. Reverses the primed state of DncV, the CD-NTase. Cleaves a CdnD-GFP (green fluorescent protein) fusion protein precisely at the C-terminus of CdnD. Overexpression decreases the efficacy of CBASS protection against phage T2. Antagonism of phage defense upon overexpression is CBASS-system specific, Cap3 from this bacteria only antagonizes its cognate CBASS system and not that of C.freundii, E.coli or V.cholerae. In terms of biological role, protects E.coli against phage T2 infection. When the cdnD-cap2-cap3-cap4 operon is introduced in E.coli there is a more than 10(3) decrease in the efficiency of T2 plaque formation. The operon does not protect against phage T5 and only about 10-fold against T7. In Enterobacter hormaechei subsp. hoffmannii (strain UCI 50), this protein is CD-NTase/cGAS isopeptidase.